A 475-amino-acid chain; its full sequence is Probable proline--tRNA ligase, mitochondrial (475 aa).

The N-terminal 29 residues, 1 to 29 (MEGLLTRCRALPALATCSRQLSGYVPCRF), are a transit peptide targeting the mitochondrion.

The protein belongs to the class-II aminoacyl-tRNA synthetase family.

The protein localises to the mitochondrion matrix. It catalyses the reaction tRNA(Pro) + L-proline + ATP = L-prolyl-tRNA(Pro) + AMP + diphosphate. Mitochondrial aminoacyl-tRNA synthetase that catalyzes the specific attachment of the proline amino acid (aa) to the homologous transfer RNA (tRNA), further participating in protein synthesis. The reaction occurs in a two steps: proline is first activated by ATP to form Pro-AMP and then transferred to the acceptor end of tRNA(Pro). This is Probable proline--tRNA ligase, mitochondrial from Homo sapiens (Human).